We begin with the raw amino-acid sequence, 85 residues long: Large ribosomal subunit protein bL27 (85 aa).

Belongs to the bacterial ribosomal protein bL27 family.

The polypeptide is Large ribosomal subunit protein bL27 (Xylella fastidiosa (strain Temecula1 / ATCC 700964)).